The primary structure comprises 313 residues: Probable cell division protein WhiA (313 aa).

Residues 280-313 (SLKELGAMLNPPIGKSGVNHRLKKLCSIADGLRQ) constitute a DNA-binding region (H-T-H motif).

The protein belongs to the WhiA family.

Involved in cell division and chromosome segregation. The polypeptide is Probable cell division protein WhiA (Lachnoclostridium phytofermentans (strain ATCC 700394 / DSM 18823 / ISDg) (Clostridium phytofermentans)).